Here is an 897-residue protein sequence, read N- to C-terminus: Beta-galactosidase (897 aa).

Residue Glu459 is the Proton donor of the active site. Glu525 acts as the Nucleophile in catalysis.

Belongs to the glycosyl hydrolase 2 family.

It catalyses the reaction Hydrolysis of terminal non-reducing beta-D-galactose residues in beta-D-galactosides.. In Clostridium acetobutylicum, this protein is Beta-galactosidase (cbgA).